The sequence spans 303 residues: MRIGTRGSKLALAQAEKVRRLLKEQGVEATITVIKTSGDVQKDSPLYMMKGYGAFVREIDDLLLKNEVDLAVHSLKDIPTVRPENLVTAAVLKRESALDVAVIRNAERLADLPEGAVVGTSSTRRAAMIYRHYPGLVTKDIRGNVDTRLRKLRDGEYDAILLAEAGLIRLGLDLKVERLDPYNFVPAANQGVIAIVARQGTPEAEVVKELNDETTWIETRVERIIAAGLDGGCVVPMGVYATRVGDEIDVIGEVLSLDGRQQVRVRETIPVAGCEEHAKQVSEKLVLAGGLKLAEEARKELDR.

Cys-233 is modified (S-(dipyrrolylmethanemethyl)cysteine).

Belongs to the HMBS family. Requires dipyrromethane as cofactor.

It carries out the reaction 4 porphobilinogen + H2O = hydroxymethylbilane + 4 NH4(+). It participates in porphyrin-containing compound metabolism; protoporphyrin-IX biosynthesis; coproporphyrinogen-III from 5-aminolevulinate: step 2/4. Functionally, tetrapolymerization of the monopyrrole PBG into the hydroxymethylbilane pre-uroporphyrinogen in several discrete steps. In Methanocella arvoryzae (strain DSM 22066 / NBRC 105507 / MRE50), this protein is Probable porphobilinogen deaminase.